A 526-amino-acid chain; its full sequence is Exodeoxyribonuclease 7 large subunit (526 aa).

The tract at residues 496–526 (GAMTTEGGTPPAGAKKRSAKPADPTKQGSLF) is disordered.

It belongs to the XseA family. As to quaternary structure, heterooligomer composed of large and small subunits.

It localises to the cytoplasm. It catalyses the reaction Exonucleolytic cleavage in either 5'- to 3'- or 3'- to 5'-direction to yield nucleoside 5'-phosphates.. Its function is as follows. Bidirectionally degrades single-stranded DNA into large acid-insoluble oligonucleotides, which are then degraded further into small acid-soluble oligonucleotides. The chain is Exodeoxyribonuclease 7 large subunit from Rhizobium etli (strain CIAT 652).